A 1616-amino-acid polypeptide reads, in one-letter code: Protein P200 (1616 aa).

Disordered regions lie at residues 1 to 41 (MPKT…DKVE), 878 to 909 (HFQPDVQPEQTPQEAKFDSPVEIPQESSQAEF), 931 to 975 (QQLE…LDQN), 1004 to 1083 (DNVE…EPVD), 1100 to 1132 (FDKNQTQTEGLEEPQVSSEAEVVDQTTTDTVGE), and 1159 to 1433 (ISEP…SEEE). Residues 891-1389 (EAKFDSPVEI…QEAKFDSPVE (499 aa)) are 2 X 26 AA repeats. Over residues 938-952 (EETVVTPTEVTAFEP) the composition is skewed to low complexity. Composition is skewed to basic and acidic residues over residues 1012–1029 (QPKETEAEITFDETKELQ) and 1059–1081 (VFEKPQLETQTEKILEEEPKSEP). A run of 2 repeats spans residues 1161–1186 (EPQVEQQPGEAVFEPSAEAKFDSPVE) and 1205–1236 (EIQPVESQPEATFDTVQPEQTPQEAKFDSPVE). Composition is skewed to polar residues over residues 1200–1227 (VQTQPEIQPVESQPEATFDTVQPEQTPQ) and 1242–1251 (EFSSEPTQQH). The tract at residues 1205–1389 (EIQPVESQPE…QEAKFDSPVE (185 aa)) is 2 X 32 AA repeats. Over residues 1256-1270 (ASFDEPNYDFDEPNY) the composition is skewed to acidic residues. Over residues 1276-1285 (SYDSDLQPSE) the composition is skewed to polar residues. Residues 1288-1302 (YDVDEPNYDFDEPNY) show a composition bias toward acidic residues. Low complexity predominate over residues 1309 to 1323 (SEPQFEPQVEQQPGE). Tandem repeats lie at residues 1310-1339 (EPQFEPQVEQQPGEAVFEPSAEAKFDSPVE) and 1358-1389 (EIQPVESQPEATFDTVQPEQTPQEAKFDSPVE). Polar residues predominate over residues 1353–1380 (VQTQPEIQPVESQPEATFDTVQPEQTPQ). Positions 1392–1406 (QEPQVSSEPEVVVQP) are enriched in low complexity. Residues 1416–1433 (VLEEPQADEIQPEASEEE) are compositionally biased toward acidic residues.

Its function is as follows. Could be an accessory structural component in cytadherence. This Mycoplasma genitalium (strain ATCC 33530 / DSM 19775 / NCTC 10195 / G37) (Mycoplasmoides genitalium) protein is Protein P200.